Here is a 203-residue protein sequence, read N- to C-terminus: Imidazoleglycerol-phosphate dehydratase (203 aa).

It belongs to the imidazoleglycerol-phosphate dehydratase family.

It localises to the cytoplasm. The enzyme catalyses D-erythro-1-(imidazol-4-yl)glycerol 3-phosphate = 3-(imidazol-4-yl)-2-oxopropyl phosphate + H2O. It participates in amino-acid biosynthesis; L-histidine biosynthesis; L-histidine from 5-phospho-alpha-D-ribose 1-diphosphate: step 6/9. The polypeptide is Imidazoleglycerol-phosphate dehydratase (Deinococcus geothermalis (strain DSM 11300 / CIP 105573 / AG-3a)).